Consider the following 228-residue polypeptide: ATP synthase subunit a (228 aa).

7 helical membrane passes run 16 to 36, 45 to 65, 80 to 100, 106 to 126, 138 to 158, 178 to 198, and 201 to 221; these read GQEWIILSHYVLVIGIIFIIA, LVPTGSQNVLEAFVGGIISMG, LIGSLALVIFVSNMIGVIPGF, NINFTLSLALIVFVYYNYLGI, FMGPMPVLAPLMFPIEIISHL, FLMVLLMLVPWILPLPGFFLL, and FGVLQAFIFSILTYVYIAGSI.

It belongs to the ATPase A chain family. F-type ATPases have 2 components, CF(1) - the catalytic core - and CF(0) - the membrane proton channel. CF(1) has five subunits: alpha(3), beta(3), gamma(1), delta(1), epsilon(1). CF(0) has three main subunits: a(1), b(2) and c(9-12). The alpha and beta chains form an alternating ring which encloses part of the gamma chain. CF(1) is attached to CF(0) by a central stalk formed by the gamma and epsilon chains, while a peripheral stalk is formed by the delta and b chains.

It is found in the cell inner membrane. Functionally, key component of the proton channel; it plays a direct role in the translocation of protons across the membrane. The sequence is that of ATP synthase subunit a from Aliarcobacter butzleri (strain RM4018) (Arcobacter butzleri).